The chain runs to 1378 residues: High molecular weight rhoptry protein 2 (1378 aa).

The first 19 residues, 1–19 (MIKVTIFLLLSIFSFNLYG), serve as a signal peptide directing secretion. 2 disulfide bridges follow: cysteine 46/cysteine 71 and cysteine 233/cysteine 240. Residues 739-759 (FVYASYILGLVFFIESHIDIA) form a helical membrane-spanning segment. Disulfide bonds link cysteine 791-cysteine 851, cysteine 871-cysteine 912, and cysteine 947-cysteine 1034.

Component of the RhopH complex. RhopH complex is composed of CLAG3.1/CLAG3.2, RhopH2 and RhopH3 with a 1:1:1 subunit stoichiometry. Interacts with CLAG3.1/CLAG3.2.

The protein resides in the host cell membrane. Its subcellular location is the parasitophorous vacuole membrane. It localises to the host cytoplasm. It is found in the cytoplasm. The protein localises to the cytoplasmic vesicle. The protein resides in the secretory vesicle. Its subcellular location is the rhoptry. Functionally, participates in the formation of new permeability pathways in Plasmodium-infected erythrocytes enabling the uptake of nutrients from the blood plasma. Required for maintaining invasion capacity of merozoites. Required for parasite growth and proliferation. This Plasmodium falciparum (isolate 3D7) protein is High molecular weight rhoptry protein 2.